The sequence spans 702 residues: Polyribonucleotide nucleotidyltransferase (702 aa).

The Mg(2+) site is built by Asp485 and Asp491. Positions Pro552–Ile612 constitute a KH domain. Positions Gly622–Lys690 constitute an S1 motif domain.

This sequence belongs to the polyribonucleotide nucleotidyltransferase family. Mg(2+) serves as cofactor.

The protein localises to the cytoplasm. It carries out the reaction RNA(n+1) + phosphate = RNA(n) + a ribonucleoside 5'-diphosphate. Functionally, involved in mRNA degradation. Catalyzes the phosphorolysis of single-stranded polyribonucleotides processively in the 3'- to 5'-direction. The chain is Polyribonucleotide nucleotidyltransferase from Clostridium botulinum (strain Kyoto / Type A2).